Here is a 280-residue protein sequence, read N- to C-terminus: Acetylglutamate kinase (280 aa).

Substrate is bound by residues 64 to 65, R86, and N177; that span reads GG.

It belongs to the acetylglutamate kinase family. ArgB subfamily.

It is found in the cytoplasm. The catalysed reaction is N-acetyl-L-glutamate + ATP = N-acetyl-L-glutamyl 5-phosphate + ADP. Its pathway is amino-acid biosynthesis; L-arginine biosynthesis; N(2)-acetyl-L-ornithine from L-glutamate: step 2/4. Its function is as follows. Catalyzes the ATP-dependent phosphorylation of N-acetyl-L-glutamate. The sequence is that of Acetylglutamate kinase from Nautilia profundicola (strain ATCC BAA-1463 / DSM 18972 / AmH).